Here is a 93-residue protein sequence, read N- to C-terminus: MALFHVRMDVAIPRDLDPKVRDETIAKEKAYSQELQRSGKWPEIWRIVGQYSNISIFDVESADELHEILWNLPLFPYMNIEIMPLTKHGSDVK.

This sequence belongs to the muconolactone Delta-isomerase family. As to quaternary structure, homodecamer.

It carries out the reaction (S)-muconolactone = (4,5-dihydro-5-oxofuran-2-yl)-acetate. It participates in aromatic compound metabolism; beta-ketoadipate pathway; 5-oxo-4,5-dihydro-2-furylacetate from catechol: step 3/3. In Rhodococcus opacus (Nocardia opaca), this protein is Muconolactone Delta-isomerase (catC).